We begin with the raw amino-acid sequence, 398 residues long: uncharacterized protein (398 aa).

The 117-residue stretch at 235 to 351 folds into the CobW C-terminal domain; the sequence is VAIVEFSARR…DIVNALNAAL (117 aa).

This is an uncharacterized protein from Mycobacterium bovis (strain ATCC BAA-935 / AF2122/97).